The following is a 139-amino-acid chain: Small ribosomal subunit protein bS6 (139 aa).

Residues 118 to 139 (SFKGGSKIETPTGSESTDIQEK) form a disordered region. Over residues 126–139 (ETPTGSESTDIQEK) the composition is skewed to polar residues.

Belongs to the bacterial ribosomal protein bS6 family.

In terms of biological role, binds together with bS18 to 16S ribosomal RNA. This chain is Small ribosomal subunit protein bS6, found in Borrelia garinii subsp. bavariensis (strain ATCC BAA-2496 / DSM 23469 / PBi) (Borreliella bavariensis).